The following is a 232-amino-acid chain: RNA chaperone ProQ (232 aa).

Residues 105 to 182 are disordered; it reads EAKARVQAQR…REEQHTPVSD (78 aa). The segment covering 117-136 has biased composition (basic and acidic residues); that stretch reads QQAKKREAAAAAGEKEDAPR. The span at 137–146 shows a compositional bias: basic residues; that stretch reads RERKPRPTTP. The segment covering 147–177 has biased composition (basic and acidic residues); sequence RRKEGAERKPRAQKPVEKAPKTAKAPREEQH.

This sequence belongs to the ProQ family.

The protein resides in the cytoplasm. Functionally, RNA chaperone with significant RNA binding, RNA strand exchange and RNA duplexing activities. May regulate ProP activity through an RNA-based, post-transcriptional mechanism. This is RNA chaperone ProQ from Shigella dysenteriae serotype 1 (strain Sd197).